The chain runs to 414 residues: Proton/glutamate-aspartate symporter (414 aa).

Over 1 to 3 (MKK) the chain is Cytoplasmic. A helical transmembrane segment spans residues 4–24 (LIAFQILIALAVGAVIGHFFP). Over 25-42 (DFGMALRPVGDGFIRLIK) the chain is Extracellular. The helical transmembrane segment at 43-63 (MIVVPIVFSTIVIGAAGSGSM) threads the bilayer. The Cytoplasmic portion of the chain corresponds to 64-73 (KKMGSLGIKT). The helical transmembrane segment at 74 to 94 (IIWFEVITTLVLGLGLLLANV) threads the bilayer. Residues 95–144 (LKPGVGLDLSHLAKKDIHELSGYTDKVVDFKQMILDIIPTNIIDVMARND) are Extracellular-facing. Residues 145 to 165 (LLAVIFFAILFGVAAAGIGKA) form a helical membrane-spanning segment. The Cytoplasmic segment spans residues 166–182 (SEPVMKFFESTAQIMFK). The helical transmembrane segment at 183 to 203 (LTQIVMVTAPIGVLALMAASV) threads the bilayer. Residues 204–219 (GQYGIELLLPMFKLVG) lie on the Extracellular side of the membrane. A helical transmembrane segment spans residues 220–240 (TVFLGLFLILFVLFPLVGLIF). Gln241 is a topological domain (cytoplasmic). A helical membrane pass occupies residues 242–262 (IKYFEVLKMIWDLFLIAFSTT). Residues 263–300 (STETILPQLMDRMEKYGCPKRVVSFVVPSGLSLNCDGS) are Extracellular-facing. A helical membrane pass occupies residues 301 to 321 (SLYLSVSCIFLAQAFQVDMTL). Residues 322–324 (SQQ) lie on the Cytoplasmic side of the membrane. A run of 2 helical transmembrane segments spans residues 325-345 (LLMM…PSGS) and 346-366 (LVVL…VAII). Residues 367-414 (AGVDRVMDMARTGVNVPGHAIACIVVSKWEKAFRQKEWVSANSQTESI) are Cytoplasmic-facing.

The protein belongs to the dicarboxylate/amino acid:cation symporter (DAACS) (TC 2.A.23) family.

It is found in the cell membrane. Its activity is regulated as follows. Glutamate uptake is inhibited by beta-hydroxyaspartate and cysteic acid. Functionally, catalyzes the proton-dependent, binding-protein-independent transport of glutamate and aspartate. The chain is Proton/glutamate-aspartate symporter from Bacillus subtilis (strain 168).